The chain runs to 107 residues: SH3 domain-binding glutamic acid-rich-like protein 2 (107 aa).

The SH3-binding motif lies at 61–67 (QGNPLPP).

The protein belongs to the SH3BGR family.

Its subcellular location is the nucleus. The chain is SH3 domain-binding glutamic acid-rich-like protein 2 (SH3BGRL2) from Pongo abelii (Sumatran orangutan).